The primary structure comprises 492 residues: 3-octaprenyl-4-hydroxybenzoate carboxy-lyase (492 aa).

Asn-175 provides a ligand contact to Mn(2+). Prenylated FMN-binding positions include 178–180, 192–194, and 197–198; these read IYR, RWL, and RG. Glu-241 is a Mn(2+) binding site. Asp-290 (proton donor) is an active-site residue.

The protein belongs to the UbiD family. In terms of assembly, homohexamer. Requires prenylated FMN as cofactor. Mn(2+) is required as a cofactor.

The protein localises to the cell membrane. It catalyses the reaction a 4-hydroxy-3-(all-trans-polyprenyl)benzoate + H(+) = a 2-(all-trans-polyprenyl)phenol + CO2. The protein operates within cofactor biosynthesis; ubiquinone biosynthesis. Catalyzes the decarboxylation of 3-octaprenyl-4-hydroxy benzoate to 2-octaprenylphenol, an intermediate step in ubiquinone biosynthesis. The protein is 3-octaprenyl-4-hydroxybenzoate carboxy-lyase of Salmonella typhimurium (strain LT2 / SGSC1412 / ATCC 700720).